A 174-amino-acid polypeptide reads, in one-letter code: Putative NADH dehydrogenase/NAD(P)H nitroreductase AF_2267 (174 aa).

Position 107–112 (107–112 (AARCLG)) interacts with NAD(+).

The protein belongs to the nitroreductase family. The cofactor is FMN.

This chain is Putative NADH dehydrogenase/NAD(P)H nitroreductase AF_2267, found in Archaeoglobus fulgidus (strain ATCC 49558 / DSM 4304 / JCM 9628 / NBRC 100126 / VC-16).